The sequence spans 346 residues: Anthranilate phosphoribosyltransferase (346 aa).

5-phospho-alpha-D-ribose 1-diphosphate is bound by residues Gly80, 83-84, Thr88, 90-93, 108-116, and Ser120; these read GD, NIST, and KHGNTAVSS. Gly80 serves as a coordination point for anthranilate. Ser92 contributes to the Mg(2+) binding site. Position 111 (Asn111) interacts with anthranilate. Arg166 contributes to the anthranilate binding site. Mg(2+) is bound by residues Asp225 and Glu226.

Belongs to the anthranilate phosphoribosyltransferase family. As to quaternary structure, homodimer. The cofactor is Mg(2+).

It carries out the reaction N-(5-phospho-beta-D-ribosyl)anthranilate + diphosphate = 5-phospho-alpha-D-ribose 1-diphosphate + anthranilate. Its pathway is amino-acid biosynthesis; L-tryptophan biosynthesis; L-tryptophan from chorismate: step 2/5. Its function is as follows. Catalyzes the transfer of the phosphoribosyl group of 5-phosphorylribose-1-pyrophosphate (PRPP) to anthranilate to yield N-(5'-phosphoribosyl)-anthranilate (PRA). The sequence is that of Anthranilate phosphoribosyltransferase from Desulforudis audaxviator (strain MP104C).